We begin with the raw amino-acid sequence, 421 residues long: ATP-dependent RNA helicase RhlB (421 aa).

A Q motif motif is present at residues 9-37; it reads THFADLPINEQVVKALSAANFSHCTPIQA. The Helicase ATP-binding domain maps to 40-216; it reads LPPLLEGNDI…YEHMDNPTHV (177 aa). Residue 53 to 60 coordinates ATP; the sequence is AQTGTGKT. A DEAD box motif is present at residues 162-165; sequence DEAD. Residues 240 to 387 form the Helicase C-terminal domain; that stretch reads KMALLLSLME…VTEYQADALL (148 aa). Residues 389-421 form a disordered region; that stretch reads DVTPPKPRHKKRMQNGRNPQKRQSSGSRNRRKP. The span at 403–415 shows a compositional bias: polar residues; that stretch reads NGRNPQKRQSSGS.

The protein belongs to the DEAD box helicase family. RhlB subfamily. Component of the RNA degradosome, which is a multiprotein complex involved in RNA processing and mRNA degradation.

It localises to the cytoplasm. It carries out the reaction ATP + H2O = ADP + phosphate + H(+). DEAD-box RNA helicase involved in RNA degradation. Has RNA-dependent ATPase activity and unwinds double-stranded RNA. This Pseudoalteromonas atlantica (strain T6c / ATCC BAA-1087) protein is ATP-dependent RNA helicase RhlB.